A 337-amino-acid polypeptide reads, in one-letter code: Undecaprenyl-phosphate 4-deoxy-4-formamido-L-arabinose transferase (337 aa).

The next 2 membrane-spanning stretches (helical) occupy residues 235-255 (LSII…LLII) and 270-290 (FVLF…MGLL).

This sequence belongs to the glycosyltransferase 2 family.

Its subcellular location is the cell inner membrane. It catalyses the reaction UDP-4-deoxy-4-formamido-beta-L-arabinose + di-trans,octa-cis-undecaprenyl phosphate = 4-deoxy-4-formamido-alpha-L-arabinopyranosyl di-trans,octa-cis-undecaprenyl phosphate + UDP. Its pathway is glycolipid biosynthesis; 4-amino-4-deoxy-alpha-L-arabinose undecaprenyl phosphate biosynthesis; 4-amino-4-deoxy-alpha-L-arabinose undecaprenyl phosphate from UDP-4-deoxy-4-formamido-beta-L-arabinose and undecaprenyl phosphate: step 1/2. The protein operates within bacterial outer membrane biogenesis; lipopolysaccharide biosynthesis. Functionally, catalyzes the transfer of 4-deoxy-4-formamido-L-arabinose from UDP to undecaprenyl phosphate. The modified arabinose is attached to lipid A and is required for resistance to polymyxin and cationic antimicrobial peptides. This Pseudomonas savastanoi pv. phaseolicola (strain 1448A / Race 6) (Pseudomonas syringae pv. phaseolicola (strain 1448A / Race 6)) protein is Undecaprenyl-phosphate 4-deoxy-4-formamido-L-arabinose transferase.